Reading from the N-terminus, the 496-residue chain is Probable cytosol aminopeptidase (496 aa).

2 residues coordinate Mn(2+): K261 and D266. K273 is a catalytic residue. Residues D284, D343, and E345 each contribute to the Mn(2+) site. R347 is a catalytic residue.

The protein belongs to the peptidase M17 family. The cofactor is Mn(2+).

Its subcellular location is the cytoplasm. It catalyses the reaction Release of an N-terminal amino acid, Xaa-|-Yaa-, in which Xaa is preferably Leu, but may be other amino acids including Pro although not Arg or Lys, and Yaa may be Pro. Amino acid amides and methyl esters are also readily hydrolyzed, but rates on arylamides are exceedingly low.. The enzyme catalyses Release of an N-terminal amino acid, preferentially leucine, but not glutamic or aspartic acids.. In terms of biological role, presumably involved in the processing and regular turnover of intracellular proteins. Catalyzes the removal of unsubstituted N-terminal amino acids from various peptides. This chain is Probable cytosol aminopeptidase, found in Bacillus pumilus (strain SAFR-032).